The primary structure comprises 272 residues: Anamorsin homolog (272 aa).

Residues 1–156 are N-terminal SAM-like domain; sequence MDSMMNQKTV…KIGSSFALKK (156 aa). The segment at 157–185 is linker; that stretch reads PVTNLFKIDLDDDVDLIDEDSLLTEEDLM. Residues cysteine 195, cysteine 202, cysteine 205, and cysteine 207 each coordinate [2Fe-2S] cluster. The interval 195-207 is fe-S binding site A; sequence CETTKKACKNCVC. Residues cysteine 233, cysteine 236, cysteine 244, and cysteine 247 each contribute to the [4Fe-4S] cluster site. 2 consecutive short sequence motifs (cx2C motif) follow at residues 233–236 and 244–247; these read CGSC and CGTC. Residues 233–247 form a fe-S binding site B region; the sequence is CGSCGLGDAFRCGTC.

The protein belongs to the anamorsin family. In terms of assembly, monomer. Interacts with ATR3. The cofactor is [2Fe-2S] cluster. [4Fe-4S] cluster is required as a cofactor.

Its subcellular location is the cytoplasm. It is found in the mitochondrion intermembrane space. Its function is as follows. Component of the cytosolic iron-sulfur (Fe-S) protein assembly (CIA) machinery. Required for the maturation of extramitochondrial Fe-S proteins. Part of an electron transfer chain functioning in an early step of cytosolic Fe-S biogenesis, facilitating the de novo assembly of a [4Fe-4S] cluster on the cytosolic Fe-S scaffold complex. Electrons are transferred from NADPH via FAD- and FMN-containing diflavin oxidoreductase TAH18/ATR3. Together with the diflavin oxidoreductase, also required for the assembly of the diferric tyrosyl radical cofactor of ribonucleotide reductase (RNR), probably by providing electrons for reduction during radical cofactor maturation in the catalytic small subunit. Required for embryo development. This chain is Anamorsin homolog, found in Arabidopsis thaliana (Mouse-ear cress).